Reading from the N-terminus, the 345-residue chain is uncharacterized protein (345 aa).

It is found in the cell membrane. In terms of biological role, involved in potassium and divalent cation transport. Enhances the transport activity of the cation/potassium transporter CzcD. This is an uncharacterized protein from Bacillus velezensis (strain DSM 23117 / BGSC 10A6 / LMG 26770 / FZB42) (Bacillus amyloliquefaciens subsp. plantarum).